Consider the following 459-residue polypeptide: MLKLYNSLTRQKEQFVPLQPGKVGMYVCGVTIYDLCHIGHGRTFVSFDMIVRYLRYSGYDVNFQRNITDVDDKIIKRANENKESCDSLTERLIAEMHRDFDALNMARPDNEPRATLHMPEIIEMVEKLIEREHAYVASNGDVLFSVSSFPEYGRLSGQNLEQLQAGARVEVEDAKRDPMDFVLWKMSKPGEPTWESPWGPGRPGWHIECSAMNSKHLGNHFDIHGGGSDLQFPHHENEIAQSCCAHDTPYVNYWMHTGMVMVDKEKMSKSLNNFFTIRDVLGHYDATTVRYFLLSGHYRSQLNYSEDNLKQAKSGLERIYTALKDLDLTVEAAPAEEFVAKFKSAMDDDFNTPEAYSVLFDMVREINRLKATDMAKASALGVALKQLADVLGILGQDVDTFFKGEGNDDEVAEIEALIVERNRARAEKDWPAADVARDGLNALGVILEDGPEGTTWRKK.

Cys28 provides a ligand contact to Zn(2+). The short motif at 30–40 (VTIYDLCHIGH) is the 'HIGH' region element. Zn(2+) contacts are provided by Cys209, His234, and Glu238. Positions 266 to 270 (KMSKS) match the 'KMSKS' region motif. ATP is bound at residue Lys269.

This sequence belongs to the class-I aminoacyl-tRNA synthetase family. Monomer. Zn(2+) is required as a cofactor.

It localises to the cytoplasm. It catalyses the reaction tRNA(Cys) + L-cysteine + ATP = L-cysteinyl-tRNA(Cys) + AMP + diphosphate. This chain is Cysteine--tRNA ligase, found in Shewanella pealeana (strain ATCC 700345 / ANG-SQ1).